A 411-amino-acid polypeptide reads, in one-letter code: LL-diaminopimelate aminotransferase (411 aa).

Positions 16 and 43 each coordinate substrate. Residues tyrosine 73, 109 to 110 (AK), tyrosine 133, asparagine 188, tyrosine 219, and 247 to 249 (SYS) each bind pyridoxal 5'-phosphate. Substrate-binding residues include lysine 110, tyrosine 133, and asparagine 188. An N6-(pyridoxal phosphate)lysine modification is found at lysine 250. Pyridoxal 5'-phosphate contacts are provided by arginine 258 and asparagine 293. Residues asparagine 293 and arginine 389 each coordinate substrate.

This sequence belongs to the class-I pyridoxal-phosphate-dependent aminotransferase family. LL-diaminopimelate aminotransferase subfamily. Homodimer. It depends on pyridoxal 5'-phosphate as a cofactor.

It carries out the reaction (2S,6S)-2,6-diaminopimelate + 2-oxoglutarate = (S)-2,3,4,5-tetrahydrodipicolinate + L-glutamate + H2O + H(+). It functions in the pathway amino-acid biosynthesis; L-lysine biosynthesis via DAP pathway; LL-2,6-diaminopimelate from (S)-tetrahydrodipicolinate (aminotransferase route): step 1/1. Functionally, involved in the synthesis of meso-diaminopimelate (m-DAP or DL-DAP), required for both lysine and peptidoglycan biosynthesis. Catalyzes the direct conversion of tetrahydrodipicolinate to LL-diaminopimelate. In Methanosphaera stadtmanae (strain ATCC 43021 / DSM 3091 / JCM 11832 / MCB-3), this protein is LL-diaminopimelate aminotransferase.